A 433-amino-acid polypeptide reads, in one-letter code: Enolase (433 aa).

Q167 contributes to the (2R)-2-phosphoglycerate binding site. E209 (proton donor) is an active-site residue. Mg(2+) is bound by residues D246, E287, and D314. 4 residues coordinate (2R)-2-phosphoglycerate: K339, R368, S369, and K390. Residue K339 is the Proton acceptor of the active site.

It belongs to the enolase family. Mg(2+) is required as a cofactor.

The protein resides in the cytoplasm. Its subcellular location is the secreted. The protein localises to the cell surface. It carries out the reaction (2R)-2-phosphoglycerate = phosphoenolpyruvate + H2O. It functions in the pathway carbohydrate degradation; glycolysis; pyruvate from D-glyceraldehyde 3-phosphate: step 4/5. In terms of biological role, catalyzes the reversible conversion of 2-phosphoglycerate (2-PG) into phosphoenolpyruvate (PEP). It is essential for the degradation of carbohydrates via glycolysis. This Prochlorococcus marinus (strain NATL2A) protein is Enolase.